Here is a 533-residue protein sequence, read N- to C-terminus: DELLA protein GAI (533 aa).

The span at 1–12 shows a compositional bias: basic residues; it reads MKRDHHHHHHQD. The interval 1–24 is disordered; sequence MKRDHHHHHHQDKKTMMMNEEDDG. Positions 28–32 match the DELLA motif motif; the sequence is DELLA. Positions 50-54 match the LEXLE motif motif; that stretch reads LEQLE. Residues 73-77 carry the VHYNP motif motif; it reads VHYNP. The GRAS domain occupies 160–529; sequence VDSQENGVRL…RPLIATSAWK (370 aa). The segment at 167–221 is leucine repeat I (LRI); sequence VRLVHALLACAEAVQKENLTVAEALVKQIGFLAVSQIGAMRKVATYFAEALARRI. The LxCxE motif motif lies at 174–178; that stretch reads LACAE. The interval 240–305 is VHIID; the sequence is QMHFYETCPY…GGPPVFRLTG (66 aa). The VHIID signature appears at 271–275; the sequence is VHVID. The tract at residues 319–351 is leucine repeat II (LRII); that stretch reads EVGCKLAHLAEAIHVEFEYRGFVANTLADLDAS. Positions 363-450 are PFYRE; it reads VAVNSVFELH…EVYLGKQICN (88 aa). An LXXLL motif motif is present at residues 371 to 375; that stretch reads LHKLL. The interval 453-529 is SAW; that stretch reads ACDGPDRVER…RPLIATSAWK (77 aa).

The protein belongs to the GRAS family. DELLA subfamily. As to quaternary structure, interacts directly with the GID2/SLY1 component of the SCF(GID2) complex. Interacts (via N-terminus) with GID1A, GID1B and GID1B (via N-terminus). Interacts with the BOI proteins BOI, BRG1, BRG2, BRG3 and NUP58. Interacts with TOPP4. Interacts with TCP14 and TCP15. Interacts with FLZ5. Binds to and coactivates GAF1/IDD2 and ENY/IDD1 at the promoter of GA20OX2 gene. Binds to PDF2 and ATML1. Interacts with the prefoldin alpha subunits PFD3 and PFD5 in the nucleus. Post-translationally, phosphorylated. In terms of processing, gibberellin (GA) induces dephosphorylation of GAI by TOPP4 and subsequent degradation by the proteasomal pathway. May be ubiquitinated, as suggested by its interaction with GID2. Ubiquitination is however unsure since in contrast to other DELLA proteins, it is not ubiquitinated and degraded upon GA application. Nevertheless, ubiquitination may be triggered by other processes. As to expression, ubiquitously expressed. Expressed in rosette leaves, roots, stems and inflorescences of greenhouse grown.

The protein localises to the nucleus. With respect to regulation, transcription activation is repressed by gibberellic acid GA(3) in the presence of TPR4. Transcriptional regulator that acts as a repressor of the gibberellin (GA) signaling pathway. Transcription coactivator of the zinc finger transcription factors GAF1/IDD2 and ENY/IDD1 in regulation of gibberellin homeostasis and signaling. No effect of the BOI proteins on its stability. Probably acts by participating in large multiprotein complexes that repress transcription of GA-inducible genes. Positively regulates XERICO expression. In contrast to RGA, it is less sensitive to GA. Its activity is probably regulated by other phytohormones such as auxin and ethylene. Involved in the regulation of seed dormancy and germination, including glucose-induced delay of seed germination. Involved in the process leading to microtubules (MTs) dissociation in response to gibberellic acid (GA) probably by mediating the translocation of the prefoldin co-chaperone complex from the cytoplasm to the nucleus. The chain is DELLA protein GAI from Arabidopsis thaliana (Mouse-ear cress).